Consider the following 225-residue polypeptide: Pathogenesis-related thaumatin-like protein 3.8 (225 aa).

The first 26 residues, methionine 1 to alanine 26, serve as a signal peptide directing secretion. 8 disulfide bridges follow: cysteine 35/cysteine 224, cysteine 76/cysteine 86, cysteine 91/cysteine 97, cysteine 139/cysteine 213, cysteine 144/cysteine 197, cysteine 152/cysteine 162, cysteine 166/cysteine 175, and cysteine 176/cysteine 184. Asparagine 188 is a glycosylation site (N-linked (GlcNAc...) asparagine).

It belongs to the thaumatin family.

Functionally, may be involved in disease resistance. This chain is Pathogenesis-related thaumatin-like protein 3.8, found in Cryptomeria japonica (Japanese cedar).